The following is a 291-amino-acid chain: 33 kDa chaperonin (291 aa).

Intrachain disulfides connect Cys229-Cys231 and Cys262-Cys265.

The protein belongs to the HSP33 family. Under oxidizing conditions two disulfide bonds are formed involving the reactive cysteines. Under reducing conditions zinc is bound to the reactive cysteines and the protein is inactive.

The protein resides in the cytoplasm. Functionally, redox regulated molecular chaperone. Protects both thermally unfolding and oxidatively damaged proteins from irreversible aggregation. Plays an important role in the bacterial defense system toward oxidative stress. This is 33 kDa chaperonin from Vibrio parahaemolyticus serotype O3:K6 (strain RIMD 2210633).